The chain runs to 349 residues: tRNA pseudouridine synthase D (349 aa).

Phe26 serves as a coordination point for substrate. Asp79 serves as the catalytic Nucleophile. Asn128 lines the substrate pocket. A TRUD domain is found at 154-302 (GVPNYFGSQR…VEGSRRAVLL (149 aa)). Phe328 is a binding site for substrate.

The protein belongs to the pseudouridine synthase TruD family.

It carries out the reaction uridine(13) in tRNA = pseudouridine(13) in tRNA. Functionally, responsible for synthesis of pseudouridine from uracil-13 in transfer RNAs. The protein is tRNA pseudouridine synthase D of Yersinia pseudotuberculosis serotype IB (strain PB1/+).